The sequence spans 465 residues: Methionine aminopeptidase 2-1 (465 aa).

Residues 1 to 100 (MGSKTAENES…QSSPPRIPLA (100 aa)) are disordered. The span at 31-40 (RGAHWSRDGD) shows a compositional bias: basic and acidic residues. A compositionally biased stretch (basic residues) spans 75–87 (SKKRKKRPKKKTS). Residue His216 participates in substrate binding. A divalent metal cation contacts are provided by Asp237, Asp248, and His317. His325 contacts substrate. Residues Glu350 and Glu446 each coordinate a divalent metal cation.

It belongs to the peptidase M24A family. Methionine aminopeptidase eukaryotic type 2 subfamily. The cofactor is Co(2+). Zn(2+) is required as a cofactor. It depends on Mn(2+) as a cofactor. Requires Fe(2+) as cofactor.

It localises to the cytoplasm. The enzyme catalyses Release of N-terminal amino acids, preferentially methionine, from peptides and arylamides.. Functionally, cotranslationally removes the N-terminal methionine from nascent proteins. The N-terminal methionine is often cleaved when the second residue in the primary sequence is small and uncharged (Met-Ala-, Cys, Gly, Pro, Ser, Thr, or Val). This Penicillium rubens (strain ATCC 28089 / DSM 1075 / NRRL 1951 / Wisconsin 54-1255) (Penicillium chrysogenum) protein is Methionine aminopeptidase 2-1.